The chain runs to 368 residues: CST complex subunit STN1 (368 aa).

Positions 1-185 (MQPGSSRCEE…KIYDQPFRSS (185 aa)) are interaction with CTC1. Residues 57-155 (VDVLGTVVGV…EIHATAYYKV (99 aa)) constitute a DNA-binding region (OB). Winged helix-turn-helix (wHTH) regions lie at residues 191–295 (EALS…YVTR) and 296–368 (EDKD…YTAF).

This sequence belongs to the STN1 family. Component of the CST complex, composed of TEN1/C17orf106, CTC1/C17orf68 and STN1; in the complex interacts directly with TEN1 and CTC1. Interacts with ACD/TPP1, POT1 and POLA1.

The protein resides in the nucleus. The protein localises to the chromosome. Its subcellular location is the telomere. Component of the CST complex proposed to act as a specialized replication factor promoting DNA replication under conditions of replication stress or natural replication barriers such as the telomere duplex. The CST complex binds single-stranded DNA with high affinity in a sequence-independent manner, while isolated subunits bind DNA with low affinity by themselves. Initially the CST complex has been proposed to protect telomeres from DNA degradation. However, the CST complex has been shown to be involved in several aspects of telomere replication. The CST complex inhibits telomerase and is involved in telomere length homeostasis; it is proposed to bind to newly telomerase-synthesized 3' overhangs and to terminate telomerase action implicating the association with the ACD:POT1 complex thus interfering with its telomerase stimulation activity. The CST complex is also proposed to be involved in fill-in synthesis of the telomeric C-strand probably implicating recruitment and activation of DNA polymerase alpha. The CST complex facilitates recovery from many forms of exogenous DNA damage; seems to be involved in the re-initiation of DNA replication at repaired forks and/or dormant origins. Required for efficicient replication of the duplex region of the telomere. Promotes efficient replication of lagging-strand telomeres. Promotes general replication start following replication-fork stalling implicating new origin firing. May be in involved in C-strand fill-in during late S/G2 phase independent of its role in telomere duplex replication. This Macaca fascicularis (Crab-eating macaque) protein is CST complex subunit STN1.